The following is a 483-amino-acid chain: BTB/POZ domain and ankyrin repeat-containing protein COCH (483 aa).

The BTB domain maps to 25–105 (SDVVFSVEGR…LYSGQVSIVP (81 aa)). The C2HC NPR-type zinc finger occupies 111-125 (RPNCGDRGCWHTHCT). Residues C114, C119, H121, and C124 each contribute to the Zn(2+) site. 4 ANK repeats span residues 249–278 (QKIRRMRRALDSSDVELVKLMVMGEGLNLD), 279–308 (EALALPYAVESCSREVVKALLELGAADVNF), 313–342 (TGKTPLHIAAEMVSPDMVAVLLDHHADPNV), and 346–380 (DGVTPLDILRTLTSDFLFKGAVPGLTHIEPNKLRL). 2 disordered regions span residues 395–435 (EEGN…NSNM) and 450–483 (MSTSRLDSGDDDHNSNQREAMNPSMYHHHHSHDY). Residues 398 to 414 (NNNNNANNNNTGSSATN) are compositionally biased toward low complexity. Basic and acidic residues predominate over residues 456–465 (DSGDDDHNSN).

Belongs to the plant 'ANKYRIN-BTB/POZ' family. 'NOOT-BOP-COCH-like' (NBCL) subfamily. As to quaternary structure, homodimer.

Its subcellular location is the nucleus. The protein localises to the cytoplasm. It is found in the cell membrane. It participates in protein modification; protein ubiquitination. Its function is as follows. May act as a substrate-specific adapter of an E3 ubiquitin-protein ligase complex (CUL3-RBX1-BTB) which mediates the ubiquitination and subsequent proteasomal degradation of target proteins. Transcriptional co-regulator involved in the promotion of leaf and floral meristem fate and determinacy. Promotes normal stipule growth and development. Required for the abscission of senescent organs, probably by regulating the cell wall disorganization in abscission zones (AZs, e.g. pulvini at the base of leaves). Down-regulates UNI expression in primordia of leaves and secondary inflorescences, and thereby controls their sizes and/or structures. Involved in the coordination of the symbiotic nodule developmental program. Promotes the formation of root nodules by interacting directly with APP1 to modulate the expression of the nuclear transcription factor Y subunit (NF-YA1), a key nodulin. Necessary for the robust maintenance of nodule identity throughout the nodule developmental program. This is BTB/POZ domain and ankyrin repeat-containing protein COCH from Pisum sativum (Garden pea).